A 635-amino-acid polypeptide reads, in one-letter code: 3-dehydroshikimate dehydratase (635 aa).

A divalent metal cation contacts are provided by glutamate 134, aspartate 165, glutamine 191, and glutamate 239. 2 consecutive VOC domains span residues 295-414 (GVEF…LVEQ) and 440-590 (RIDH…VYTE). Mg(2+) contacts are provided by histidine 443, histidine 521, and glutamate 599.

Belongs to the bacterial two-domain DSD family. As to quaternary structure, homodimer. Co(2+) is required as a cofactor. It depends on Ni(2+) as a cofactor. Requires Mg(2+) as cofactor. The cofactor is Mn(2+).

The enzyme catalyses 3-dehydroshikimate = 3,4-dihydroxybenzoate + H2O. The protein operates within aromatic compound metabolism; 3,4-dihydroxybenzoate biosynthesis. In terms of biological role, catalyzes the conversion of 3-dehydroshikimate to protocatechuate (3,4-dihydroxybenzoate), a common intermediate of quinate and shikimate degradation pathways. The chain is 3-dehydroshikimate dehydratase from Pseudomonas putida (strain ATCC 47054 / DSM 6125 / CFBP 8728 / NCIMB 11950 / KT2440).